A 584-amino-acid chain; its full sequence is A-type ATP synthase subunit A (584 aa).

234–241 (GPFGSGKT) contacts ATP.

Belongs to the ATPase alpha/beta chains family. As to quaternary structure, has multiple subunits with at least A(3), B(3), C, D, E, F, H, I and proteolipid K(x).

The protein localises to the cell membrane. The enzyme catalyses ATP + H2O + 4 H(+)(in) = ADP + phosphate + 5 H(+)(out). Its function is as follows. Component of the A-type ATP synthase that produces ATP from ADP in the presence of a proton gradient across the membrane. The A chain is the catalytic subunit. The chain is A-type ATP synthase subunit A from Methanoculleus marisnigri (strain ATCC 35101 / DSM 1498 / JR1).